The sequence spans 193 residues: ATP-dependent Clp protease proteolytic subunit (193 aa).

Ser-98 serves as the catalytic Nucleophile. His-123 is a catalytic residue.

This sequence belongs to the peptidase S14 family. In terms of assembly, fourteen ClpP subunits assemble into 2 heptameric rings which stack back to back to give a disk-like structure with a central cavity, resembling the structure of eukaryotic proteasomes.

The protein resides in the cytoplasm. The catalysed reaction is Hydrolysis of proteins to small peptides in the presence of ATP and magnesium. alpha-casein is the usual test substrate. In the absence of ATP, only oligopeptides shorter than five residues are hydrolyzed (such as succinyl-Leu-Tyr-|-NHMec, and Leu-Tyr-Leu-|-Tyr-Trp, in which cleavage of the -Tyr-|-Leu- and -Tyr-|-Trp bonds also occurs).. Its function is as follows. Cleaves peptides in various proteins in a process that requires ATP hydrolysis. Has a chymotrypsin-like activity. Plays a major role in the degradation of misfolded proteins. In Haemophilus influenzae (strain 86-028NP), this protein is ATP-dependent Clp protease proteolytic subunit.